Here is a 306-residue protein sequence, read N- to C-terminus: Pantothenate kinase (306 aa).

91 to 98 (GSVAVGKS) is an ATP binding site.

This sequence belongs to the prokaryotic pantothenate kinase family.

It is found in the cytoplasm. It catalyses the reaction (R)-pantothenate + ATP = (R)-4'-phosphopantothenate + ADP + H(+). It participates in cofactor biosynthesis; coenzyme A biosynthesis; CoA from (R)-pantothenate: step 1/5. The chain is Pantothenate kinase from Streptococcus pneumoniae (strain JJA).